The following is a 124-amino-acid chain: Large ribosomal subunit protein uL22c (124 aa).

This sequence belongs to the universal ribosomal protein uL22 family. In terms of assembly, part of the 50S ribosomal subunit.

The protein resides in the plastid. It is found in the chloroplast. Functionally, this protein binds specifically to 23S rRNA. Its function is as follows. The globular domain of the protein is located near the polypeptide exit tunnel on the outside of the subunit, while an extended beta-hairpin is found that lines the wall of the exit tunnel in the center of the 70S ribosome. The polypeptide is Large ribosomal subunit protein uL22c (rpl22) (Amborella trichopoda).